Reading from the N-terminus, the 1387-residue chain is DNA-directed RNA polymerase subunit beta' (1387 aa).

Zn(2+)-binding residues include cysteine 70, cysteine 72, cysteine 85, and cysteine 88. Positions 461, 463, and 465 each coordinate Mg(2+). Cysteine 808, cysteine 882, cysteine 889, and cysteine 892 together coordinate Zn(2+). The segment at 1367–1387 is disordered; that stretch reads QDEAKGVGQETPRLSGQEAAE.

This sequence belongs to the RNA polymerase beta' chain family. As to quaternary structure, the RNAP catalytic core consists of 2 alpha, 1 beta, 1 beta' and 1 omega subunit. When a sigma factor is associated with the core the holoenzyme is formed, which can initiate transcription. The cofactor is Mg(2+). Zn(2+) serves as cofactor.

It catalyses the reaction RNA(n) + a ribonucleoside 5'-triphosphate = RNA(n+1) + diphosphate. In terms of biological role, DNA-dependent RNA polymerase catalyzes the transcription of DNA into RNA using the four ribonucleoside triphosphates as substrates. The polypeptide is DNA-directed RNA polymerase subunit beta' (Granulibacter bethesdensis (strain ATCC BAA-1260 / CGDNIH1)).